The following is a 194-amino-acid chain: CASP-like protein 1D1 (194 aa).

The span at 1–16 (MGSDETKSTLDTERST) shows a compositional bias: basic and acidic residues. Positions 1-23 (MGSDETKSTLDTERSTVPRTGTT) are disordered. The Cytoplasmic portion of the chain corresponds to 1 to 31 (MGSDETKSTLDTERSTVPRTGTTTKSCSITQ). A helical membrane pass occupies residues 32-52 (VVLRFVLFAATLTSIVVMVTS). The Extracellular segment spans residues 53–77 (KQTKNIFIPGTPIRIPAAKFTNSPA). The chain crosses the membrane as a helical span at residues 78–98 (LIYFVVALSVACFYSIVSTFV). Over 99–109 (TVSAFKKHSCS) the chain is Cytoplasmic. Residues 110 to 130 (AILLLNLAIMDAVMVGIVASA) form a helical membrane-spanning segment. At 131-163 (TGAGGGVAYLGLKGNKEVRWGKICNIYDKFCRH) the chain is on the extracellular side. Residues 164-184 (VGGAIAVSLFASVILLLLSII) traverse the membrane as a helical segment. Topologically, residues 185-194 (SVLSLYKKIR) are cytoplasmic.

It belongs to the Casparian strip membrane proteins (CASP) family. As to quaternary structure, homodimer and heterodimers.

It localises to the cell membrane. The chain is CASP-like protein 1D1 from Arabidopsis lyrata subsp. lyrata (Lyre-leaved rock-cress).